The chain runs to 644 residues: Protein lin-9 (644 aa).

The tract at residues 1-77 (MSSAVRSPRK…GRDSPSVNSL (77 aa)) is disordered. A compositionally biased stretch (basic residues) spans 50-62 (SIKRTGSPKKSPA).

This sequence belongs to the lin-9 family. In terms of assembly, component of the DRM complex, at least composed of lin-9, lin-35, lin-37, lin-52, lin-53, lin-54- dpl-1 and efl-1. Interacts with zft-11; the interaction is required to suppress the activation of non-neuronal genes in neurons.

The protein resides in the nucleus. Its function is as follows. Synthetic multivulva class B (synMuvB) protein. SynMuvB proteins are required to repress the induction of vulval development by Ras signaling and probably act by forming the multiprotein DRM complex that represses transcription. Required for the development of sheath cells in the hermaphrodite gonad and for the development of the male spicule, rays and gonad. In association with the zinc finger protein ztf-11, negatively regulates the expression of non-neuronal genes during neurogenesis. In Caenorhabditis elegans, this protein is Protein lin-9.